The sequence spans 166 residues: Regulatory protein RecX (166 aa).

The protein belongs to the RecX family.

Its subcellular location is the cytoplasm. Its function is as follows. Modulates RecA activity. This Escherichia fergusonii (strain ATCC 35469 / DSM 13698 / CCUG 18766 / IAM 14443 / JCM 21226 / LMG 7866 / NBRC 102419 / NCTC 12128 / CDC 0568-73) protein is Regulatory protein RecX.